The chain runs to 128 residues: Sulfurtransferase TusD (128 aa).

C78 acts as the Cysteine persulfide intermediate in catalysis.

It belongs to the DsrE/TusD family. As to quaternary structure, heterohexamer, formed by a dimer of trimers. The hexameric TusBCD complex contains 2 copies each of TusB, TusC and TusD. The TusBCD complex interacts with TusE.

The protein resides in the cytoplasm. Part of a sulfur-relay system required for 2-thiolation of 5-methylaminomethyl-2-thiouridine (mnm(5)s(2)U) at tRNA wobble positions. Accepts sulfur from TusA and transfers it in turn to TusE. In Klebsiella pneumoniae subsp. pneumoniae (strain ATCC 700721 / MGH 78578), this protein is Sulfurtransferase TusD.